The following is a 163-amino-acid chain: Nucleotide-binding protein Dvul_1191 (163 aa).

The protein belongs to the YajQ family.

Functionally, nucleotide-binding protein. The protein is Nucleotide-binding protein Dvul_1191 of Nitratidesulfovibrio vulgaris (strain DP4) (Desulfovibrio vulgaris).